The following is a 433-amino-acid chain: Protein translocase subunit SecY (433 aa).

The next 10 membrane-spanning stretches (helical) occupy residues 17 to 37, 71 to 91, 117 to 137, 141 to 161, 184 to 204, 212 to 232, 268 to 288, 309 to 329, 366 to 386, and 388 to 408; these read IIFTIFVLIICRFGSFIPIAG, IFALAIMPYITASIIIQLMSV, LTVLLASLQAYGVAVSLESIV, GPVVIIPGLFFKITTVITLVV, LIIFIGIISGVPSAIISMFEL, PLVAIAVCAGVVILISIIIFF, GVIPPIFASSILLFPATLANF, IYILLYVALIMFFSFFYTAIV, LTVVGGIYLSVICIIPELLMN, and YVISLSLGGTSFLIVVNVVLD.

The protein belongs to the SecY/SEC61-alpha family. In terms of assembly, component of the Sec protein translocase complex. Heterotrimer consisting of SecY, SecE and SecG subunits. The heterotrimers can form oligomers, although 1 heterotrimer is thought to be able to translocate proteins. Interacts with the ribosome. Interacts with SecDF, and other proteins may be involved. Interacts with SecA.

Its subcellular location is the cell inner membrane. Functionally, the central subunit of the protein translocation channel SecYEG. Consists of two halves formed by TMs 1-5 and 6-10. These two domains form a lateral gate at the front which open onto the bilayer between TMs 2 and 7, and are clamped together by SecE at the back. The channel is closed by both a pore ring composed of hydrophobic SecY resides and a short helix (helix 2A) on the extracellular side of the membrane which forms a plug. The plug probably moves laterally to allow the channel to open. The ring and the pore may move independently. The chain is Protein translocase subunit SecY from Rickettsia bellii (strain RML369-C).